The primary structure comprises 78 residues: DNA-directed RNA polymerase subunit omega (78 aa).

This sequence belongs to the RNA polymerase subunit omega family. In terms of assembly, in cyanobacteria the RNAP catalytic core is composed of 2 alpha, 1 beta, 1 beta', 1 gamma and 1 omega subunit. When a sigma factor is associated with the core the holoenzyme is formed, which can initiate transcription.

It carries out the reaction RNA(n) + a ribonucleoside 5'-triphosphate = RNA(n+1) + diphosphate. Its function is as follows. Promotes RNA polymerase assembly. Latches the N- and C-terminal regions of the beta' subunit thereby facilitating its interaction with the beta and alpha subunits. The protein is DNA-directed RNA polymerase subunit omega of Prochlorococcus marinus (strain MIT 9515).